Consider the following 227-residue polypeptide: MATAVGMNIQLLLEAADYLERREREAEHGYASMLPYSKDRDAFKRRNKPKKNSTSSRSTHNEMEKNRRAHLRLCLEKLKGLVPLGPESSRHTTLSLLTKAKLHIKKLEDCDRKAVHQIDQLQREQRHLKRRLEKLGAERTRMDSVGSVVSSERSDSDREELDVDVDVDVDVDVEGTDYLNGDLGWSSSVSDSDERGSMQSLGSDEGYSSATVKRAKLQDGHKAGLGL.

The Nuclear localization signal signature appears at 21-48 (RREREAEHGYASMLPYSKDRDAFKRRNK). Disordered stretches follow at residues 30–66 (YASMLPYSKDRDAFKRRNKPKKNSTSSRSTHNEMEKN), 142–161 (MDSVGSVVSSERSDSDREEL), and 184–227 (GWSS…GLGL). The 53-residue stretch at 55 to 107 (SSRSTHNEMEKNRRAHLRLCLEKLKGLVPLGPESSRHTTLSLLTKAKLHIKKL) folds into the bHLH domain. The segment covering 198–211 (MQSLGSDEGYSSAT) has biased composition (polar residues). Basic and acidic residues predominate over residues 216-227 (KLQDGHKAGLGL).

Heterodimer with MAX; the interaction is required for DNA-binding. DNA binding requires dimerization with another bHLH protein; does not form homodimers, and does not bind to DNA in the absence of MAX in vitro. Interacts with RNF17. Ubiquitinated by BIRC2/c-IAP1, leading to its subsequent degradation by the proteasome.

Its subcellular location is the nucleus. Its function is as follows. Component of a transcriptional repressor complex together with MAX. In complex with MAX binds to the core DNA sequence 5'-CAC[GA]TG-3'. Antagonizes MYC transcriptional activity by competing with MYC for MAX binding. Binds to the TERT promoter and represses telomerase expression, possibly by interfering with MYC binding. In Mus musculus (Mouse), this protein is Max dimerization protein 1 (Mxd1).